The primary structure comprises 162 residues: 6,7-dimethyl-8-ribityllumazine synthase (162 aa).

5-amino-6-(D-ribitylamino)uracil is bound by residues phenylalanine 23, 61–63 (AYE), and 85–87 (AVI). 90-91 (DT) is a (2S)-2-hydroxy-3-oxobutyl phosphate binding site. The active-site Proton donor is the histidine 93. Residue phenylalanine 118 participates in 5-amino-6-(D-ribitylamino)uracil binding. A (2S)-2-hydroxy-3-oxobutyl phosphate-binding site is contributed by arginine 132.

This sequence belongs to the DMRL synthase family.

The catalysed reaction is (2S)-2-hydroxy-3-oxobutyl phosphate + 5-amino-6-(D-ribitylamino)uracil = 6,7-dimethyl-8-(1-D-ribityl)lumazine + phosphate + 2 H2O + H(+). It participates in cofactor biosynthesis; riboflavin biosynthesis; riboflavin from 2-hydroxy-3-oxobutyl phosphate and 5-amino-6-(D-ribitylamino)uracil: step 1/2. In terms of biological role, catalyzes the formation of 6,7-dimethyl-8-ribityllumazine by condensation of 5-amino-6-(D-ribitylamino)uracil with 3,4-dihydroxy-2-butanone 4-phosphate. This is the penultimate step in the biosynthesis of riboflavin. The polypeptide is 6,7-dimethyl-8-ribityllumazine synthase (Synechococcus sp. (strain CC9902)).